A 389-amino-acid chain; its full sequence is Apoptosis inhibitor U19 (389 aa).

It belongs to the beta-herpesvirinae UL38 protein family. As to quaternary structure, interacts with host MDM2; this interaction leads to the stabilization of host TP53.

The protein resides in the host cytoplasm. Its subcellular location is the host nucleus. Functionally, plays a role in the inhibition of host apoptosis to facilitate efficient viral replication. Promotes stabilization and inactivation of host TP53 through interaction with host MDM2. In Homo sapiens (Human), this protein is Apoptosis inhibitor U19 (U19).